The primary structure comprises 239 residues: Lactate utilization protein A 2 (239 aa).

This sequence belongs to the LutA/YkgE family.

Its function is as follows. Is involved in L-lactate degradation and allows cells to grow with lactate as the sole carbon source. This is Lactate utilization protein A 2 from Bacillus mycoides (strain KBAB4) (Bacillus weihenstephanensis).